The chain runs to 31 residues: Cytochrome b6-f complex subunit 6 (31 aa).

The chain crosses the membrane as a helical span at residues 4-24 (LTSYFGFLLAALTITPALFIG).

It belongs to the PetL family. The 4 large subunits of the cytochrome b6-f complex are cytochrome b6, subunit IV (17 kDa polypeptide, PetD), cytochrome f and the Rieske protein, while the 4 small subunits are PetG, PetL, PetM and PetN. The complex functions as a dimer.

It localises to the plastid. The protein resides in the chloroplast thylakoid membrane. Functionally, component of the cytochrome b6-f complex, which mediates electron transfer between photosystem II (PSII) and photosystem I (PSI), cyclic electron flow around PSI, and state transitions. PetL is important for photoautotrophic growth as well as for electron transfer efficiency and stability of the cytochrome b6-f complex. The sequence is that of Cytochrome b6-f complex subunit 6 from Agrostis stolonifera (Creeping bentgrass).